A 95-amino-acid polypeptide reads, in one-letter code: Corticostatin-3 (95 aa).

Positions 1 to 19 (MRTLALLAAILLVALQAQA) are cleaved as a signal peptide. A propeptide spanning residues 20-62 (EHVSVSIDEVVDQQPPQAEDQDVAIYVKEHESSALEALGVKAG) is cleaved from the precursor. 3 disulfides stabilise this stretch: cysteine 65-cysteine 93, cysteine 67-cysteine 82, and cysteine 72-cysteine 92.

Belongs to the alpha-defensin family.

The protein resides in the secreted. Its function is as follows. This peptide has antibiotic, anti-fungi and antiviral activity. It also inhibits corticotropin (ACTH) stimulated corticosterone production. The sequence is that of Corticostatin-3 from Oryctolagus cuniculus (Rabbit).